Here is a 288-residue protein sequence, read N- to C-terminus: 4-diphosphocytidyl-2-C-methyl-D-erythritol kinase (288 aa).

Lysine 10 is a catalytic residue. ATP is bound at residue 99-109 (PMGGGLGGGSS). Aspartate 141 is an active-site residue.

Belongs to the GHMP kinase family. IspE subfamily. As to quaternary structure, homodimer.

It catalyses the reaction 4-CDP-2-C-methyl-D-erythritol + ATP = 4-CDP-2-C-methyl-D-erythritol 2-phosphate + ADP + H(+). It functions in the pathway isoprenoid biosynthesis; isopentenyl diphosphate biosynthesis via DXP pathway; isopentenyl diphosphate from 1-deoxy-D-xylulose 5-phosphate: step 3/6. Its function is as follows. Catalyzes the phosphorylation of the position 2 hydroxy group of 4-diphosphocytidyl-2C-methyl-D-erythritol. The polypeptide is 4-diphosphocytidyl-2-C-methyl-D-erythritol kinase (Serratia proteamaculans (strain 568)).